We begin with the raw amino-acid sequence, 374 residues long: Carbamoyl phosphate synthase small chain (374 aa).

Residues Met1–Pro186 form a CPSase region. L-glutamine contacts are provided by Ser47, Gly237, and Gly239. The Glutamine amidotransferase type-1 domain occupies Lys189–Ser374. The active-site Nucleophile is Cys265. Leu266, Gln269, Asn307, Gly309, and Phe310 together coordinate L-glutamine. Active-site residues include His349 and Glu351.

Belongs to the CarA family. In terms of assembly, composed of two chains; the small (or glutamine) chain promotes the hydrolysis of glutamine to ammonia, which is used by the large (or ammonia) chain to synthesize carbamoyl phosphate. Tetramer of heterodimers (alpha,beta)4.

The enzyme catalyses hydrogencarbonate + L-glutamine + 2 ATP + H2O = carbamoyl phosphate + L-glutamate + 2 ADP + phosphate + 2 H(+). It carries out the reaction L-glutamine + H2O = L-glutamate + NH4(+). The protein operates within amino-acid biosynthesis; L-arginine biosynthesis; carbamoyl phosphate from bicarbonate: step 1/1. It functions in the pathway pyrimidine metabolism; UMP biosynthesis via de novo pathway; (S)-dihydroorotate from bicarbonate: step 1/3. Functionally, small subunit of the glutamine-dependent carbamoyl phosphate synthetase (CPSase). CPSase catalyzes the formation of carbamoyl phosphate from the ammonia moiety of glutamine, carbonate, and phosphate donated by ATP, constituting the first step of 2 biosynthetic pathways, one leading to arginine and/or urea and the other to pyrimidine nucleotides. The small subunit (glutamine amidotransferase) binds and cleaves glutamine to supply the large subunit with the substrate ammonia. In Xylella fastidiosa (strain Temecula1 / ATCC 700964), this protein is Carbamoyl phosphate synthase small chain.